Consider the following 197-residue polypeptide: Glycerol-3-phosphate acyltransferase (197 aa).

The next 5 helical transmembrane spans lie at 7–27 (TLLP…LILT), 55–75 (GLAA…VLIV), 78–98 (VWPG…CFPV), 116–136 (LALA…VLFL), and 157–177 (VLGY…VLYL).

The protein belongs to the PlsY family. In terms of assembly, probably interacts with PlsX.

It is found in the cell inner membrane. It carries out the reaction an acyl phosphate + sn-glycerol 3-phosphate = a 1-acyl-sn-glycero-3-phosphate + phosphate. The protein operates within lipid metabolism; phospholipid metabolism. In terms of biological role, catalyzes the transfer of an acyl group from acyl-phosphate (acyl-PO(4)) to glycerol-3-phosphate (G3P) to form lysophosphatidic acid (LPA). This enzyme utilizes acyl-phosphate as fatty acyl donor, but not acyl-CoA or acyl-ACP. The chain is Glycerol-3-phosphate acyltransferase from Novosphingobium aromaticivorans (strain ATCC 700278 / DSM 12444 / CCUG 56034 / CIP 105152 / NBRC 16084 / F199).